Here is a 210-residue protein sequence, read N- to C-terminus: Actin-related protein 3C (210 aa).

Positions methionine 1 to alanine 21 are cleaved as a signal peptide.

Belongs to the actin family. As to expression, expressed in kidney, stomach, spleen, bone marrow, uterus, testis, placenta, skeletal muscle, mammary gland, lung, fetal liver, and fetal kidney, but not detected in small intestine, brain, and thymus. Expressed in low-metastatic lung adenocarcinoma cells but not in high-metastatic ones.

Functionally, may play a role in the suppression of metastatic potential in lung adenoma carcinoma cells. This is Actin-related protein 3C (ACTR3C) from Homo sapiens (Human).